A 61-amino-acid chain; its full sequence is Small ribosomal subunit protein uS14 (61 aa).

Positions 24, 27, 40, and 43 each coordinate Zn(2+).

It belongs to the universal ribosomal protein uS14 family. Zinc-binding uS14 subfamily. In terms of assembly, part of the 30S ribosomal subunit. Contacts proteins S3 and S10. Requires Zn(2+) as cofactor.

Its function is as follows. Binds 16S rRNA, required for the assembly of 30S particles and may also be responsible for determining the conformation of the 16S rRNA at the A site. In Desulfosudis oleivorans (strain DSM 6200 / JCM 39069 / Hxd3) (Desulfococcus oleovorans), this protein is Small ribosomal subunit protein uS14.